The following is a 424-amino-acid chain: MELSYRLFICLLLWGSTELCYPQPFWLLQGGASRAETSVQPVLVECREATLLVTVSKDLFGTGKLIRAADLTLGPEACEPLVSMDTEDVVRFEVGLHECGSSMQVTDDALVYSTFLLHDPRPVGNLSIVRTNRAEIPIECRYPRQGNVSSQAILPTWLPFRTTVFSEEKLTFSLRLMEENWNAEKRSPTFHLGDAAHLQAEIHTGSHVPLRLFVDHCVATPTPDQNASPYHTIVDFHGCLVDGLTDASSAFKVPRPGPDTLQFTVDVFHFANDSRNMIYITCHLKAIPAEQEPDELNKACSFSKSSNSWFPVEGPADICQCCSKGDCGTPSHSRRQPHVVSQWSRSASRNRRHVTEEADITVGPLIFLDRSADYEVEQWALPADTSVLLLGIGLAVVASLTLTAVILIFTRRWRTASRPVSASE.

The signal sequence occupies residues 1-22 (MELSYRLFICLLLWGSTELCYP). Pyrrolidone carboxylic acid is present on glutamine 23. At 23–387 (QPFWLLQGGA…QWALPADTSV (365 aa)) the chain is on the extracellular side. The ZP domain maps to 45 to 307 (ECREATLLVT…KACSFSKSSN (263 aa)). 2 disulfides stabilise this stretch: cysteine 46/cysteine 140 and cysteine 78/cysteine 99. Residues asparagine 125 and asparagine 147 are each glycosylated (N-linked (GlcNAc...) asparagine). Residues threonine 156, threonine 162, and threonine 163 are each glycosylated (O-linked (GalNAc...) threonine). 2 disulfide bridges follow: cysteine 217–cysteine 282 and cysteine 239–cysteine 300. Asparagine 272 carries N-linked (GlcNAc...) asparagine glycosylation. Residues 351-424 (RRHVTEEADI…TASRPVSASE (74 aa)) constitute a propeptide, removed in mature form. A helical membrane pass occupies residues 388-408 (LLLGIGLAVVASLTLTAVILI). Over 409–424 (FTRRWRTASRPVSASE) the chain is Cytoplasmic.

This sequence belongs to the ZP domain family. ZPC subfamily. Polymers of ZP2 and ZP3 organized into long filaments cross-linked by ZP1 homodimers. Interacts with ZP1 and ZP2. In terms of processing, proteolytically cleaved before the transmembrane segment to yield the secreted ectodomain incorporated in the zona pellucida. Post-translationally, N-glycosylated. O-glycosylated; removal of O-linked glycans may play an important role in the post-fertilization block to polyspermy. Expressed in oocytes.

Its subcellular location is the zona pellucida. The protein localises to the cell membrane. Its function is as follows. Component of the zona pellucida, an extracellular matrix surrounding oocytes which mediates sperm binding, induction of the acrosome reaction and prevents post-fertilization polyspermy. The zona pellucida is composed of 3 to 4 glycoproteins, ZP1, ZP2, ZP3, and ZP4. ZP3 is essential for sperm binding and zona matrix formation. This Macaca radiata (Bonnet macaque) protein is Zona pellucida sperm-binding protein 3 (ZP3).